Reading from the N-terminus, the 419-residue chain is Tryptophan synthase beta chain (419 aa).

N6-(pyridoxal phosphate)lysine is present on Lys113.

Belongs to the TrpB family. Tetramer of two alpha and two beta chains. Pyridoxal 5'-phosphate is required as a cofactor.

The catalysed reaction is (1S,2R)-1-C-(indol-3-yl)glycerol 3-phosphate + L-serine = D-glyceraldehyde 3-phosphate + L-tryptophan + H2O. It functions in the pathway amino-acid biosynthesis; L-tryptophan biosynthesis; L-tryptophan from chorismate: step 5/5. The beta subunit is responsible for the synthesis of L-tryptophan from indole and L-serine. The protein is Tryptophan synthase beta chain of Picrophilus torridus (strain ATCC 700027 / DSM 9790 / JCM 10055 / NBRC 100828 / KAW 2/3).